A 462-amino-acid chain; its full sequence is ATP synthase subunit beta 1 (462 aa).

151 to 158 (GGAGVGKT) contacts ATP.

The protein belongs to the ATPase alpha/beta chains family. In terms of assembly, F-type ATPases have 2 components, CF(1) - the catalytic core - and CF(0) - the membrane proton channel. CF(1) has five subunits: alpha(3), beta(3), gamma(1), delta(1), epsilon(1). CF(0) has four main subunits: a(1), b(1), b'(1) and c(9-12).

The protein resides in the cell inner membrane. It carries out the reaction ATP + H2O + 4 H(+)(in) = ADP + phosphate + 5 H(+)(out). Its function is as follows. Produces ATP from ADP in the presence of a proton gradient across the membrane. The catalytic sites are hosted primarily by the beta subunits. The sequence is that of ATP synthase subunit beta 1 from Chlorobium luteolum (strain DSM 273 / BCRC 81028 / 2530) (Pelodictyon luteolum).